Here is a 495-residue protein sequence, read N- to C-terminus: Cobyric acid synthase (495 aa).

One can recognise a GATase cobBQ-type domain in the interval 249 to 443 (EININVIRLP…LHGLFDNGAW (195 aa)). The active-site Nucleophile is C330. The active site involves H435.

The protein belongs to the CobB/CobQ family. CobQ subfamily.

It participates in cofactor biosynthesis; adenosylcobalamin biosynthesis. Functionally, catalyzes amidations at positions B, D, E, and G on adenosylcobyrinic A,C-diamide. NH(2) groups are provided by glutamine, and one molecule of ATP is hydrogenolyzed for each amidation. The chain is Cobyric acid synthase from Gloeothece citriformis (strain PCC 7424) (Cyanothece sp. (strain PCC 7424)).